The following is a 454-amino-acid chain: Phosphoglucosamine mutase (454 aa).

Serine 104 acts as the Phosphoserine intermediate in catalysis. Residues serine 104, aspartate 247, aspartate 249, and aspartate 251 each contribute to the Mg(2+) site. Serine 104 is modified (phosphoserine).

This sequence belongs to the phosphohexose mutase family. It depends on Mg(2+) as a cofactor. Post-translationally, activated by phosphorylation.

The enzyme catalyses alpha-D-glucosamine 1-phosphate = D-glucosamine 6-phosphate. Functionally, catalyzes the conversion of glucosamine-6-phosphate to glucosamine-1-phosphate. This chain is Phosphoglucosamine mutase, found in Bifidobacterium animalis subsp. lactis (strain AD011).